A 406-amino-acid chain; its full sequence is Endo-xylogalacturonan hydrolase A (406 aa).

A signal peptide spans 1-18; the sequence is MALYRNLYLLASLGLSSA. PbH1 repeat units lie at residues 183 to 213, 214 to 257, 266 to 289, 299 to 320, and 333 to 375; these read ATNVVFSNLKMDANSKSDNPPKNTDGFDIGE, STYV…SVGS, VKNIYVTGATMINSTKAAGIKTYP, VSNVTFNDFTVDNSDYAFQIQS, and PGNA…SISG. Asp228 serves as the catalytic Proton donor. Residue His251 is part of the active site. Residues Asn278 and Asn301 are each glycosylated (N-linked (GlcNAc...) asparagine).

Belongs to the glycosyl hydrolase 28 family.

The protein localises to the secreted. Functionally, pectinolytic enzyme involved in the degradation of xylogalacturonan (xga), a galacturonan backbone heavily substituted with xylose, and which is one important component of the hairy regions of pectin. Activity requires a galacturonic acid backbone substituted with xylose. This is Endo-xylogalacturonan hydrolase A (xghA) from Aspergillus tubingensis.